Reading from the N-terminus, the 325-residue chain is GTP 3',8-cyclase (325 aa).

One can recognise a Radical SAM core domain in the interval Met1–Ala226. Residue Arg8 participates in GTP binding. The [4Fe-4S] cluster site is built by Cys15 and Cys19. Tyr21 is a binding site for S-adenosyl-L-methionine. Cys22 lines the [4Fe-4S] cluster pocket. Arg60 contributes to the GTP binding site. Residue Gly64 coordinates S-adenosyl-L-methionine. Position 91 (Ser91) interacts with GTP. Ser115 is a binding site for S-adenosyl-L-methionine. GTP is bound at residue Lys152. Met186 lines the S-adenosyl-L-methionine pocket. Residues Cys249 and Cys252 each coordinate [4Fe-4S] cluster. A GTP-binding site is contributed by Arg254–Arg256. Cys266 is a binding site for [4Fe-4S] cluster.

This sequence belongs to the radical SAM superfamily. MoaA family. In terms of assembly, monomer and homodimer. Requires [4Fe-4S] cluster as cofactor.

The catalysed reaction is GTP + AH2 + S-adenosyl-L-methionine = (8S)-3',8-cyclo-7,8-dihydroguanosine 5'-triphosphate + 5'-deoxyadenosine + L-methionine + A + H(+). Its pathway is cofactor biosynthesis; molybdopterin biosynthesis. Its function is as follows. Catalyzes the cyclization of GTP to (8S)-3',8-cyclo-7,8-dihydroguanosine 5'-triphosphate. The chain is GTP 3',8-cyclase from Gloeobacter violaceus (strain ATCC 29082 / PCC 7421).